Consider the following 393-residue polypeptide: MLSNAQRALIKATVPLLETGGEALITHFYRTMLGEYPEVRPLFNQAHQASGDQPRALANGVLMYARHIDQLQELGPLVAKVVNKHVSLQVLPEHYPIVGTCLLRAIREVLGEQIATDEVLEAWGAAYQQLADLLIEAEESVYAASAQADGGWRGVRRFRVARKQAESEEITSFYLEPVDGQPLLAFQPGQYIGLRLDIDGEEVRRNYSLSAASNGREYRISVKREAGGRVSNYLHDRVAEGDELDLFPPAGDFVLRDSDKPLVLITAGVGITPALAMLQEALPQARPIRFIHCARHGGVHAFRDWIEDVSAQHEQVEHFFCYSEPRAGDSADAEGLLSREKLADWLPQERDLDAYFLGPRPFMAQVKRHLADLGVPSQQCHYEFFGPAAALDA.

A Globin domain is found at M1–E139. Position 85 (H85) interacts with heme b. Active-site charge relay system residues include Y95 and E138. The reductase stretch occupies residues G150–A393. An FAD-binding FR-type domain is found at R153–R256. Residues Y191 and R205–S208 each bind FAD. G268 to P273 contacts NADP(+). Position 384–387 (F384–P387) interacts with FAD.

This sequence belongs to the globin family. Two-domain flavohemoproteins subfamily. The protein in the C-terminal section; belongs to the flavoprotein pyridine nucleotide cytochrome reductase family. Requires heme b as cofactor. FAD serves as cofactor.

It carries out the reaction 2 nitric oxide + NADPH + 2 O2 = 2 nitrate + NADP(+) + H(+). The enzyme catalyses 2 nitric oxide + NADH + 2 O2 = 2 nitrate + NAD(+) + H(+). In terms of biological role, is involved in NO detoxification in an aerobic process, termed nitric oxide dioxygenase (NOD) reaction that utilizes O(2) and NAD(P)H to convert NO to nitrate, which protects the bacterium from various noxious nitrogen compounds. Therefore, plays a central role in the inducible response to nitrosative stress. This Pseudomonas aeruginosa (strain ATCC 15692 / DSM 22644 / CIP 104116 / JCM 14847 / LMG 12228 / 1C / PRS 101 / PAO1) protein is Flavohemoprotein.